Here is a 137-residue protein sequence, read N- to C-terminus: Small ribosomal subunit protein uS12 (137 aa).

The segment at 1–57 is disordered; sequence MPTINQLVRKPRKSKTKQSDSPVLNRGFNSKKKQFTNLNSPQKRGVCTRVGTMTPRK. Asp102 is subject to 3-methylthioaspartic acid. Positions 118-137 are disordered; the sequence is SGVDGRRQGRSLYGTKKPKN.

Belongs to the universal ribosomal protein uS12 family. Part of the 30S ribosomal subunit. Contacts proteins S8 and S17. May interact with IF1 in the 30S initiation complex.

With S4 and S5 plays an important role in translational accuracy. Its function is as follows. Interacts with and stabilizes bases of the 16S rRNA that are involved in tRNA selection in the A site and with the mRNA backbone. Located at the interface of the 30S and 50S subunits, it traverses the body of the 30S subunit contacting proteins on the other side and probably holding the rRNA structure together. The combined cluster of proteins S8, S12 and S17 appears to hold together the shoulder and platform of the 30S subunit. In Staphylococcus epidermidis (strain ATCC 12228 / FDA PCI 1200), this protein is Small ribosomal subunit protein uS12.